The chain runs to 97 residues: Nuclear protein 2 (97 aa).

The tract at residues 76 to 97 (LLNGQRKRRQRQLHPKMRTRLT) is disordered. Residues 80–97 (QRKRRQRQLHPKMRTRLT) show a composition bias toward basic residues.

The protein belongs to the NUPR family.

It is found in the nucleus. Its function is as follows. Acts as a transcriptional repressor by inhibiting gene expression at the NUPR1 promoter in a p53/TP53-dependent manner in cancer cells. Involved in the G1 cell cycle arrest, and in a decrease in cell viability and cell proliferation. Plays a role as a negative regulator of the protumoral factor NUPR1. The polypeptide is Nuclear protein 2 (Homo sapiens (Human)).